We begin with the raw amino-acid sequence, 161 residues long: Nucleotide-binding protein AZOSEA28950 (161 aa).

It belongs to the YajQ family.

Nucleotide-binding protein. The protein is Nucleotide-binding protein AZOSEA28950 of Aromatoleum aromaticum (strain DSM 19018 / LMG 30748 / EbN1) (Azoarcus sp. (strain EbN1)).